The chain runs to 527 residues: Pyruvate kinase 2, cytosolic (527 aa).

Position 58 (arginine 58) interacts with substrate. Positions 60, 62, 92, and 93 each coordinate K(+). Residue 60 to 63 participates in ATP binding; the sequence is DFSW. Lysine 256 provides a ligand contact to substrate. Glutamate 258 provides a ligand contact to Mg(2+). Substrate contacts are provided by glycine 281, asparagine 282, and threonine 313. Residue asparagine 282 coordinates Mg(2+).

The protein belongs to the pyruvate kinase family. Homotetramer. Mg(2+) serves as cofactor. It depends on K(+) as a cofactor.

The protein localises to the cytoplasm. Its subcellular location is the cytosol. The catalysed reaction is pyruvate + ATP = phosphoenolpyruvate + ADP + H(+). The protein operates within carbohydrate degradation; glycolysis; pyruvate from D-glyceraldehyde 3-phosphate: step 5/5. Functionally, key regulatory enzyme of the glycolytic pathway that catalyzes the final step of glycolysis, converting ADP and phosphoenolpyruvate (PEP) to ATP and pyruvate by essentially irreversible transphosphorylation. The sequence is that of Pyruvate kinase 2, cytosolic from Oryza sativa subsp. indica (Rice).